A 1073-amino-acid polypeptide reads, in one-letter code: Ring-infected erythrocyte surface antigen (1073 aa).

The signal sequence occupies residues 1 to 65 (MRPFHAYSWI…IIGILYIILN (65 aa)). N-linked (GlcNAc...) asparagine glycosylation occurs at Asn-71. The segment covering 428–444 (DTSEEESVEENEEEHTV) has biased composition (acidic residues). The disordered stretch occupies residues 428 to 514 (DTSEEESVEE…SDVQQTSEAA (87 aa)). Residues 436–504 (EENEEEHTVD…VAEEHVEEPA (69 aa)) are tandem repeats 1. Residues 445–456 (DDEHVEEHTADD) are compositionally biased toward basic and acidic residues. The span at 457–470 (EHVEEPTVADDEHV) shows a compositional bias: acidic residues. Basic and acidic residues predominate over residues 476–502 (ADEHVEEPTVAEEHVEEPTVAEEHVEE). The J domain occupies 521 to 589 (DTLYYDILGV…KRWYNKYGYD (69 aa)). N-linked (GlcNAc...) asparagine glycans are attached at residues Asn-639, Asn-773, and Asn-777. A tandem repeats 2 region spans residues 891–1073 (NAEENVEHDA…VEEHNEEYDE (183 aa)). Basic and acidic residues predominate over residues 894-930 (ENVEHDAEENVEHDAEENVEHDAEENVEHDAEENVEH). Residues 894–1073 (ENVEHDAEEN…VEEHNEEYDE (180 aa)) form a disordered region. Residues 931–1073 (DAEENVEENV…VEEHNEEYDE (143 aa)) are compositionally biased toward acidic residues.

Post-translationally, the Tyr residues in the variant tetrameric sequences in the RESA repeat are possibly phosphorylated (by homology with band 3).

It localises to the cell membrane. In terms of biological role, may disrupt the normal intermolecular interactions of the cytoplasmic domain of band 3 and thereby facilitate the invagination of the red cell membrane which is necessary for the formation of the parasitophorous vacuole. The protein is Ring-infected erythrocyte surface antigen (RESA) of Plasmodium falciparum (isolate FC27 / Papua New Guinea).